The chain runs to 546 residues: Amidophosphoribosyltransferase (546 aa).

Positions 1–26 (MSAPQQQQQSQQKQQQHVRVVEQQQV) are enriched in low complexity. The interval 1-39 (MSAPQQQQQSQQKQQQHVRVVEQQQVEPAEAVTSSMESE) is disordered. A propeptide spanning residues 1-53 (MSAPQQQQQSQQKQQQHVRVVEQQQVEPAEAVTSSMESESISASKELTGLTHE) is cleaved from the precursor. C54 (nucleophile) is an active-site residue. The Glutamine amidotransferase type-2 domain occupies 54-302 (CGVFGAIACG…PGEIVELSRS (249 aa)). A Phosphoserine modification is found at S113. T114 carries the post-translational modification Phosphothreonine. S120 carries the phosphoserine modification. C321 lines the [4Fe-4S] cluster pocket. Residues S368, D430, and D431 each contribute to the Mg(2+) site. 3 residues coordinate [4Fe-4S] cluster: C467, C528, and C531.

The protein in the C-terminal section; belongs to the purine/pyrimidine phosphoribosyltransferase family. Requires Mg(2+) as cofactor. [4Fe-4S] cluster serves as cofactor.

It catalyses the reaction 5-phospho-beta-D-ribosylamine + L-glutamate + diphosphate = 5-phospho-alpha-D-ribose 1-diphosphate + L-glutamine + H2O. The protein operates within purine metabolism; IMP biosynthesis via de novo pathway; N(1)-(5-phospho-D-ribosyl)glycinamide from 5-phospho-alpha-D-ribose 1-diphosphate: step 1/2. Functionally, involved in the first step (and regulatory point) of the de novo biosynthesis of purine nucleotides, where it catalyzes the transfer of glutamine amide to 5-phospho-alpha-D-ribose 1-diphosphate. The protein is Amidophosphoribosyltransferase (Prat) of Drosophila melanogaster (Fruit fly).